A 234-amino-acid polypeptide reads, in one-letter code: Pepsin inhibitor Dit33 (234 aa).

The N-terminal stretch at 1-17 (MKILFCFVLLAIAALRA) is a signal peptide. Cys135 and Cys230 form a disulfide bridge. The interval 200–222 (RHETSSQPSDATTISTTTQAPVE) is disordered. Over residues 204–219 (SSQPSDATTISTTTQA) the composition is skewed to polar residues.

The protein belongs to the protease inhibitor I33 family.

It is found in the secreted. Its function is as follows. Aspartyl protease inhibitor. This Dirofilaria immitis (Canine heartworm) protein is Pepsin inhibitor Dit33 (DIT33).